The sequence spans 71 residues: Small ribosomal subunit protein bS21 (71 aa).

The protein belongs to the bacterial ribosomal protein bS21 family.

This Shewanella woodyi (strain ATCC 51908 / MS32) protein is Small ribosomal subunit protein bS21.